Reading from the N-terminus, the 446-residue chain is N-succinylarginine dihydrolase (446 aa).

Residues 19–28 (AGLSFGNVAS), asparagine 110, and 137–138 (HR) each bind substrate. Residue glutamate 174 is part of the active site. Arginine 213 provides a ligand contact to substrate. Histidine 249 is an active-site residue. Substrate contacts are provided by aspartate 251 and asparagine 364. The active-site Nucleophile is cysteine 370.

Belongs to the succinylarginine dihydrolase family. As to quaternary structure, homodimer.

It carries out the reaction N(2)-succinyl-L-arginine + 2 H2O + 2 H(+) = N(2)-succinyl-L-ornithine + 2 NH4(+) + CO2. It participates in amino-acid degradation; L-arginine degradation via AST pathway; L-glutamate and succinate from L-arginine: step 2/5. Functionally, catalyzes the hydrolysis of N(2)-succinylarginine into N(2)-succinylornithine, ammonia and CO(2). The protein is N-succinylarginine dihydrolase of Burkholderia ambifaria (strain ATCC BAA-244 / DSM 16087 / CCUG 44356 / LMG 19182 / AMMD) (Burkholderia cepacia (strain AMMD)).